A 716-amino-acid polypeptide reads, in one-letter code: Delta-1-pyrroline-5-carboxylate synthase 1 (716 aa).

Positions 1–296 (MASVDPSRSF…WESSKDVSTR (296 aa)) are glutamate 5-kinase. Substrate contacts are provided by Ser60, Asp157, and Asn176. Residues 196-197 (SD), 202-207 (YSGPPS), and 236-242 (RGGMTAK) each bind ATP. The gamma-glutamyl phosphate reductase stretch occupies residues 297–716 (EMAVAARDCS…VYTHKSLPLQ (420 aa)).

The protein in the N-terminal section; belongs to the glutamate 5-kinase family. This sequence in the C-terminal section; belongs to the gamma-glutamyl phosphate reductase family. In terms of tissue distribution, expressed at high levels in leaves.

It carries out the reaction L-glutamate + ATP = L-glutamyl 5-phosphate + ADP. The enzyme catalyses L-glutamate 5-semialdehyde + phosphate + NADP(+) = L-glutamyl 5-phosphate + NADPH + H(+). The protein operates within amino-acid biosynthesis; L-proline biosynthesis; L-glutamate 5-semialdehyde from L-glutamate: step 1/2. Its pathway is amino-acid biosynthesis; L-proline biosynthesis; L-glutamate 5-semialdehyde from L-glutamate: step 2/2. Its activity is regulated as follows. Feedback regulated by proline. P5CS plays a key role in proline biosynthesis, leading to osmoregulation in plants. Involved in abiotic stress tolerance. The polypeptide is Delta-1-pyrroline-5-carboxylate synthase 1 (Oryza sativa subsp. japonica (Rice)).